We begin with the raw amino-acid sequence, 86 residues long: Muscarinic toxin MTX6 (86 aa).

An N-terminal signal peptide occupies residues 1–21; that stretch reads MKTLLLTLVVVTILCLDLGYT. Intrachain disulfides connect C24/C45, C38/C63, C67/C78, and C79/C84.

It belongs to the three-finger toxin family. Short-chain subfamily. Aminergic toxin sub-subfamily. As to quaternary structure, monomer. Expressed by the venom gland.

The protein localises to the secreted. Binds to the muscarinic acetylcholine receptor (CHRM). The chain is Muscarinic toxin MTX6 from Ophiophagus hannah (King cobra).